Here is a 357-residue protein sequence, read N- to C-terminus: UDP-N-acetylglucosamine--N-acetylmuramyl-(pentapeptide) pyrophosphoryl-undecaprenol N-acetylglucosamine transferase (357 aa).

UDP-N-acetyl-alpha-D-glucosamine contacts are provided by residues 12-14, Asn124, Arg162, Ser190, Ile243, 262-267, and Gln288; these read TGG and ALTVAE.

Belongs to the glycosyltransferase 28 family. MurG subfamily.

The protein localises to the cell inner membrane. The enzyme catalyses di-trans,octa-cis-undecaprenyl diphospho-N-acetyl-alpha-D-muramoyl-L-alanyl-D-glutamyl-meso-2,6-diaminopimeloyl-D-alanyl-D-alanine + UDP-N-acetyl-alpha-D-glucosamine = di-trans,octa-cis-undecaprenyl diphospho-[N-acetyl-alpha-D-glucosaminyl-(1-&gt;4)]-N-acetyl-alpha-D-muramoyl-L-alanyl-D-glutamyl-meso-2,6-diaminopimeloyl-D-alanyl-D-alanine + UDP + H(+). Its pathway is cell wall biogenesis; peptidoglycan biosynthesis. Cell wall formation. Catalyzes the transfer of a GlcNAc subunit on undecaprenyl-pyrophosphoryl-MurNAc-pentapeptide (lipid intermediate I) to form undecaprenyl-pyrophosphoryl-MurNAc-(pentapeptide)GlcNAc (lipid intermediate II). The protein is UDP-N-acetylglucosamine--N-acetylmuramyl-(pentapeptide) pyrophosphoryl-undecaprenol N-acetylglucosamine transferase of Alcanivorax borkumensis (strain ATCC 700651 / DSM 11573 / NCIMB 13689 / SK2).